A 129-amino-acid chain; its full sequence is MTLEELVKAIEGLTVAELAELVKMLEERFGVSAAAPVMAAMPVAGAAAPSAAAAEEKDSFDVLLKSFGAKKVEVIKVVREITGLGLKEAKDLVEKAGAADAFIKQGVKKEEAEEIKKKITEVGGEVEIK.

Belongs to the bacterial ribosomal protein bL12 family. In terms of assembly, homodimer. Part of the ribosomal stalk of the 50S ribosomal subunit. Forms a multimeric L10(L12)X complex, where L10 forms an elongated spine to which 2 to 4 L12 dimers bind in a sequential fashion. Binds GTP-bound translation factors.

Functionally, forms part of the ribosomal stalk which helps the ribosome interact with GTP-bound translation factors. Is thus essential for accurate translation. This Fervidobacterium nodosum (strain ATCC 35602 / DSM 5306 / Rt17-B1) protein is Large ribosomal subunit protein bL12.